The sequence spans 379 residues: Deoxyguanosinetriphosphate triphosphohydrolase-like protein (379 aa).

The region spanning 69 to 200 is the HD domain; that stretch reads RLTHTIEVAQ…ANLADEIAYS (132 aa).

This sequence belongs to the dGTPase family. Type 2 subfamily.

This is Deoxyguanosinetriphosphate triphosphohydrolase-like protein from Azoarcus sp. (strain BH72).